We begin with the raw amino-acid sequence, 379 residues long: Anhydro-N-acetylmuramic acid kinase (379 aa).

An ATP-binding site is contributed by 9–16; that stretch reads GTSVDGID.

The protein belongs to the anhydro-N-acetylmuramic acid kinase family.

It catalyses the reaction 1,6-anhydro-N-acetyl-beta-muramate + ATP + H2O = N-acetyl-D-muramate 6-phosphate + ADP + H(+). Its pathway is amino-sugar metabolism; 1,6-anhydro-N-acetylmuramate degradation. The protein operates within cell wall biogenesis; peptidoglycan recycling. In terms of biological role, catalyzes the specific phosphorylation of 1,6-anhydro-N-acetylmuramic acid (anhMurNAc) with the simultaneous cleavage of the 1,6-anhydro ring, generating MurNAc-6-P. Is required for the utilization of anhMurNAc either imported from the medium or derived from its own cell wall murein, and thus plays a role in cell wall recycling. The chain is Anhydro-N-acetylmuramic acid kinase from Picosynechococcus sp. (strain ATCC 27264 / PCC 7002 / PR-6) (Agmenellum quadruplicatum).